The sequence spans 342 residues: S-adenosylmethionine:tRNA ribosyltransferase-isomerase (342 aa).

This sequence belongs to the QueA family. In terms of assembly, monomer.

Its subcellular location is the cytoplasm. The catalysed reaction is 7-aminomethyl-7-carbaguanosine(34) in tRNA + S-adenosyl-L-methionine = epoxyqueuosine(34) in tRNA + adenine + L-methionine + 2 H(+). The protein operates within tRNA modification; tRNA-queuosine biosynthesis. In terms of biological role, transfers and isomerizes the ribose moiety from AdoMet to the 7-aminomethyl group of 7-deazaguanine (preQ1-tRNA) to give epoxyqueuosine (oQ-tRNA). In Sulfurimonas denitrificans (strain ATCC 33889 / DSM 1251) (Thiomicrospira denitrificans (strain ATCC 33889 / DSM 1251)), this protein is S-adenosylmethionine:tRNA ribosyltransferase-isomerase.